We begin with the raw amino-acid sequence, 406 residues long: Dematin (406 aa).

Disordered regions lie at residues 1–30 (MERLQKQPLTSPGSVSSSRDSSVPGSPSSI) and 78–333 (LPRS…DRGN). The span at 11-29 (SPGSVSSSRDSSVPGSPSS) shows a compositional bias: low complexity. A phosphoserine mark is found at serine 16, serine 18, serine 26, serine 92, serine 96, serine 105, serine 110, serine 113, serine 157, and serine 227. The span at 105 to 114 (SPGTISQASA) shows a compositional bias: polar residues. Over residues 217 to 228 (EEEEEEEDDDSG) the composition is skewed to acidic residues. Residues 225 to 309 (DDSGEEMKAL…SRLQSTDFSP (85 aa)) are interaction with RASGRF2. 2 stretches are compositionally biased toward basic and acidic residues: residues 229–243 (EEMKALRERQREELS) and 253–262 (ILKEEMEKSL). Phosphoserine occurs at positions 270, 280, 290, 304, 316, 334, 373, and 384. The span at 282-323 (HAGTSKSSSLPAYGRTTLSRLQSTDFSPSGSEAESPGLQNGE) shows a compositional bias: polar residues. In terms of domain architecture, HP spans 338 to 406 (VLEQKIYPYE…NELKKKASLF (69 aa)). Serine 404 is modified (phosphoserine; by PKA).

The protein belongs to the villin/gelsolin family. In terms of assembly, monomeric; under reducing conditions. Self-associates. Exists under oxidizing condition as a trimer linked by disulfide bonds. Found in a complex with DMTN, F-actin and spectrin. Found in a complex with ADD2, DMTN and SLC2A1. Interacts with F-actin, ITPKB and spectrin. Interacts with SLC2A1 (via C-terminus cytoplasmic region). Interacts with RASGRF2. Phosphorylated. Phosphorylation at Ser-404 by PKA causes the C-terminal headpiece domain to associate with the N-terminal core domain, and leads to the inhibition of its actin bundling activity.

The protein resides in the cytoplasm. It is found in the cytosol. The protein localises to the perinuclear region. It localises to the cytoskeleton. Its subcellular location is the cell membrane. The protein resides in the membrane. It is found in the endomembrane system. The protein localises to the cell projection. In terms of biological role, membrane-cytoskeleton-associated protein with F-actin-binding activity that induces F-actin bundles formation and stabilization. Its F-actin-bundling activity is reversibly regulated upon its phosphorylation by the cAMP-dependent protein kinase A (PKA). Binds to the erythrocyte membrane glucose transporter-1 SLC2A1/GLUT1, and hence stabilizes and attaches the spectrin-actin network to the erythrocytic plasma membrane. Plays a role in maintaining the functional integrity of PKA-activated erythrocyte shape and the membrane mechanical properties. Also plays a role as a modulator of actin dynamics in fibroblasts; acts as a negative regulator of the RhoA activation pathway. In platelets, functions as a regulator of internal calcium mobilization across the dense tubular system that affects platelet granule secretion pathways and aggregation. Also required for the formation of a diverse set of cell protrusions, such as filopodia and lamellipodia, necessary for platelet cell spreading, motility and migration. Acts as a tumor suppressor and inhibits malignant cell transformation. The chain is Dematin (DMTN) from Bos taurus (Bovine).